The sequence spans 207 residues: Ribosomal RNA large subunit methyltransferase E (207 aa).

The S-adenosyl-L-methionine site is built by G60, W62, D80, D96, and D121. K161 serves as the catalytic Proton acceptor.

It belongs to the class I-like SAM-binding methyltransferase superfamily. RNA methyltransferase RlmE family.

Its subcellular location is the cytoplasm. It carries out the reaction uridine(2552) in 23S rRNA + S-adenosyl-L-methionine = 2'-O-methyluridine(2552) in 23S rRNA + S-adenosyl-L-homocysteine + H(+). In terms of biological role, specifically methylates the uridine in position 2552 of 23S rRNA at the 2'-O position of the ribose in the fully assembled 50S ribosomal subunit. The protein is Ribosomal RNA large subunit methyltransferase E of Azotobacter vinelandii (strain DJ / ATCC BAA-1303).